The primary structure comprises 378 residues: Glutamate 5-kinase (378 aa).

Lys-19 is a binding site for ATP. Substrate is bound by residues Ser-60, Asp-147, and Asn-159. Residues 179-180 (SD) and 221-227 (SGGMRTK) contribute to the ATP site. The 78-residue stretch at 285 to 362 (KGTLTIDAGA…GEMEQLLGYR (78 aa)) folds into the PUA domain.

Belongs to the glutamate 5-kinase family.

It is found in the cytoplasm. The catalysed reaction is L-glutamate + ATP = L-glutamyl 5-phosphate + ADP. It participates in amino-acid biosynthesis; L-proline biosynthesis; L-glutamate 5-semialdehyde from L-glutamate: step 1/2. Functionally, catalyzes the transfer of a phosphate group to glutamate to form L-glutamate 5-phosphate. This is Glutamate 5-kinase from Gluconobacter oxydans (strain 621H) (Gluconobacter suboxydans).